Consider the following 394-residue polypeptide: S-adenosylmethionine synthase (394 aa).

Histidine 18 provides a ligand contact to ATP. Aspartate 20 serves as a coordination point for Mg(2+). Glutamate 46 is a binding site for K(+). The L-methionine site is built by glutamate 59 and glutamine 102. Residues 102 to 112 (QSPDIDMGVSA) are flexible loop. ATP-binding positions include 175 to 177 (DGK), aspartate 250, 256 to 257 (RK), alanine 273, and lysine 277. L-methionine is bound at residue aspartate 250. Residue lysine 281 participates in L-methionine binding.

It belongs to the AdoMet synthase family. In terms of assembly, homotetramer; dimer of dimers. The cofactor is Mg(2+). K(+) is required as a cofactor.

It localises to the cytoplasm. The catalysed reaction is L-methionine + ATP + H2O = S-adenosyl-L-methionine + phosphate + diphosphate. It participates in amino-acid biosynthesis; S-adenosyl-L-methionine biosynthesis; S-adenosyl-L-methionine from L-methionine: step 1/1. In terms of biological role, catalyzes the formation of S-adenosylmethionine (AdoMet) from methionine and ATP. The overall synthetic reaction is composed of two sequential steps, AdoMet formation and the subsequent tripolyphosphate hydrolysis which occurs prior to release of AdoMet from the enzyme. The protein is S-adenosylmethionine synthase of Brachyspira hyodysenteriae (strain ATCC 49526 / WA1).